A 554-amino-acid polypeptide reads, in one-letter code: Chaperonin GroEL (554 aa).

Residues 30–33, K51, 87–91, G416, and D503 contribute to the ATP site; these read TLGP and DGTTT.

The protein belongs to the chaperonin (HSP60) family. In terms of assembly, forms a cylinder of 14 subunits composed of two heptameric rings stacked back-to-back. Interacts with the co-chaperonin GroES.

The protein localises to the cytoplasm. It carries out the reaction ATP + H2O + a folded polypeptide = ADP + phosphate + an unfolded polypeptide.. Functionally, together with its co-chaperonin GroES, plays an essential role in assisting protein folding. The GroEL-GroES system forms a nano-cage that allows encapsulation of the non-native substrate proteins and provides a physical environment optimized to promote and accelerate protein folding. The chain is Chaperonin GroEL from Holospora obtusa.